A 95-amino-acid polypeptide reads, in one-letter code: MTKSELIERLAGQQSHIPAKVVEDAVKEMLEHMATTLSEGERIEIRGFGSFSLHYRAPRTGRNPKTGDKVELEGKYVPHFKPGKELRDRANIYGG.

It belongs to the bacterial histone-like protein family. In terms of assembly, heterodimer of an alpha and a beta chain.

In terms of biological role, this protein is one of the two subunits of integration host factor, a specific DNA-binding protein that functions in genetic recombination as well as in transcriptional and translational control. The sequence is that of Integration host factor subunit beta from Erwinia tasmaniensis (strain DSM 17950 / CFBP 7177 / CIP 109463 / NCPPB 4357 / Et1/99).